We begin with the raw amino-acid sequence, 631 residues long: MFNRRLLRHVRYAFQQVRSNHSLQERIDAIPIERYRNFSIVAHVDHGKSTLSDRLLELTNVIKPGGKQVLDKLEVERERGITIKAQTCSMFYQDPRTKLDYLLHLVDTPGHVDFRAEVSRSYASCGGALLLVDASQGVQAQTVANFYLAYSMDLKLIPVINKIDLDIADIDQAEEQVENMFELPKSDCIKVSAKTGLHVEQLLPAIVDRIPPPTGKVEKPLRALLVDSWYDSYLGVVLLVHIVDGQVKRGDKIITAANGLKYEVRECGIMYPDRVATNTLKSGQVGYLVPGMKESKDAKIGDTLMHLGKESITEVLPGFEEPKPMVFVGAFPADGAEFKALDDDISRLVLNDRSVSLQRETSNALGQGWRLGFLGSLHASVFTERLEKEYGSKLILTQPTVPFLIKFKDGEKKIITNPDDFPDLSLRRSNLESLEEPFVEAIMTLPQEYLGKVIQLCDDSHGVQKEITYLNMTGQVMLRYELPLSYLVDDFFGKLKSVSRGYASLDYEDVGYKQSDIVKLELLVNGKSVDALAQVMHRDQTEHIGKEWVKKFKKFIKSQLFEVVIQARANNKIIARETIKAKRKDVLSKLHASDISRRKKLLSKQKQGKKNMKTVGNIQINQDAFQSFLRR.

Residues methionine 1–serine 19 constitute a mitochondrion transit peptide. The region spanning glutamate 33–threonine 214 is the tr-type G domain. GTP-binding positions include alanine 42 to serine 49, aspartate 107 to histidine 111, and asparagine 161 to aspartate 164.

Belongs to the TRAFAC class translation factor GTPase superfamily. Classic translation factor GTPase family. LepA subfamily.

Its subcellular location is the mitochondrion inner membrane. It catalyses the reaction GTP + H2O = GDP + phosphate + H(+). Functionally, promotes mitochondrial protein synthesis. May act as a fidelity factor of the translation reaction, by catalyzing a one-codon backward translocation of tRNAs on improperly translocated ribosomes. Binds to mitochondrial ribosomes in a GTP-dependent manner. This is Translation factor GUF1, mitochondrial from Kluyveromyces lactis (strain ATCC 8585 / CBS 2359 / DSM 70799 / NBRC 1267 / NRRL Y-1140 / WM37) (Yeast).